A 527-amino-acid polypeptide reads, in one-letter code: Ribonuclease Y 2 (527 aa).

A helical transmembrane segment spans residues Ile2–Leu22. The HD domain maps to Gln339 to Ala432.

The protein belongs to the RNase Y family.

The protein resides in the cell membrane. In terms of biological role, endoribonuclease that initiates mRNA decay. This is Ribonuclease Y 2 from Bdellovibrio bacteriovorus (strain ATCC 15356 / DSM 50701 / NCIMB 9529 / HD100).